The chain runs to 207 residues: Urease accessory protein UreG (207 aa).

Residue Gly-14–Thr-21 coordinates GTP.

The protein belongs to the SIMIBI class G3E GTPase family. UreG subfamily. Homodimer. UreD, UreF and UreG form a complex that acts as a GTP-hydrolysis-dependent molecular chaperone, activating the urease apoprotein by helping to assemble the nickel containing metallocenter of UreC. The UreE protein probably delivers the nickel.

It is found in the cytoplasm. Its function is as follows. Facilitates the functional incorporation of the urease nickel metallocenter. This process requires GTP hydrolysis, probably effectuated by UreG. This is Urease accessory protein UreG from Tolumonas auensis (strain DSM 9187 / NBRC 110442 / TA 4).